Here is a 277-residue protein sequence, read N- to C-terminus: Isoprenyl transferase 1 (277 aa).

The interval 1 to 30 is disordered; that stretch reads MAVRGILGRQRREYRTPEPHPSGARPPKLG. Asp42 is a catalytic residue. Residue Asp42 participates in Mg(2+) binding. Substrate contacts are provided by residues 43-46, Trp47, Arg55, His59, and 87-89; these read GNGR and STE. The active-site Proton acceptor is Asn90. Substrate contacts are provided by residues Trp91, Arg93, Arg210, and 216–218; that span reads RTS. Glu229 provides a ligand contact to Mg(2+).

The protein belongs to the UPP synthase family. Homodimer. The cofactor is Mg(2+).

Its function is as follows. Catalyzes the condensation of isopentenyl diphosphate (IPP) with allylic pyrophosphates generating different type of terpenoids. The protein is Isoprenyl transferase 1 of Streptomyces coelicolor (strain ATCC BAA-471 / A3(2) / M145).